The primary structure comprises 111 residues: Large ribosomal subunit protein eL31 (111 aa).

It belongs to the eukaryotic ribosomal protein eL31 family.

In Dictyostelium discoideum (Social amoeba), this protein is Large ribosomal subunit protein eL31 (rpl31).